The sequence spans 691 residues: DNA ligase (691 aa).

Residues 41–45, 90–91, and Glu-130 contribute to the NAD(+) site; these read DAEYD and SL. The N6-AMP-lysine intermediate role is filled by Lys-132. Arg-153, Glu-190, Lys-307, and Lys-331 together coordinate NAD(+). Positions 425, 428, 443, and 449 each coordinate Zn(2+). The 82-residue stretch at 610-691 folds into the BRCT domain; it reads APQGVLAGKT…LHQLLEGNTP (82 aa).

The protein belongs to the NAD-dependent DNA ligase family. LigA subfamily. The cofactor is Mg(2+). Requires Mn(2+) as cofactor.

The enzyme catalyses NAD(+) + (deoxyribonucleotide)n-3'-hydroxyl + 5'-phospho-(deoxyribonucleotide)m = (deoxyribonucleotide)n+m + AMP + beta-nicotinamide D-nucleotide.. In terms of biological role, DNA ligase that catalyzes the formation of phosphodiester linkages between 5'-phosphoryl and 3'-hydroxyl groups in double-stranded DNA using NAD as a coenzyme and as the energy source for the reaction. It is essential for DNA replication and repair of damaged DNA. The protein is DNA ligase of Burkholderia cenocepacia (strain HI2424).